Consider the following 674-residue polypeptide: L-type lectin-domain containing receptor kinase SIT1 (674 aa).

A signal peptide spans 1-27; it reads MRRPELIMRSLPLILFLSLGSFHLAAA. The Extracellular portion of the chain corresponds to 28–301; that stretch reads AVDDQFTFDG…IARAPSNVLK (274 aa). The legume-lectin like stretch occupies residues 31-275; sequence DQFTFDGFAG…VLAWSFKMDG (245 aa). N42, N61, N143, N196, N219, N240, and N281 each carry an N-linked (GlcNAc...) asparagine glycan. A helical transmembrane segment spans residues 302 to 322; it reads ILLPIASAALVSALAIAVLVI. Over 323–674 the chain is Cytoplasmic; the sequence is HRRRRRYAEL…GNISDIPRAR (352 aa). Residues 357–636 form the Protein kinase domain; sequence FSDERLLGFG…LDGAMPLPEL (280 aa). ATP contacts are provided by residues 363–371 and K386; that span reads LGFGGFGRV. D482 (proton acceptor) is an active-site residue. 4 positions are modified to phosphothreonine: T511, T515, T516, and T521.

It in the C-terminal section; belongs to the protein kinase superfamily. Ser/Thr protein kinase family. In the N-terminal section; belongs to the leguminous lectin family. As to quaternary structure, interacts with B'KAPPA. In terms of processing, autophosphorylated at Thr-511, Thr-515 or Thr-516, and Thr-521 in response to salt stress. Dephosphorylated by phosphatase 2A in response to salt stress. Expressed in root epidermal cells.

The protein localises to the cell membrane. The enzyme catalyses L-seryl-[protein] + ATP = O-phospho-L-seryl-[protein] + ADP + H(+). It catalyses the reaction L-threonyl-[protein] + ATP = O-phospho-L-threonyl-[protein] + ADP + H(+). Its activity is regulated as follows. Activated by autophosphorylation in response to salt stress. In terms of biological role, lectin-domain containing receptor kinase involved in salt stress response. Acts as a negative regulator of salt tolerance. Mediates salt sensitivity by phosphorylating and activating MPK3 and MPK6. Promotes ethylene production and mediates salt-induced ethylene signaling. Promotes the accumulation of reactive oxygen species (ROS) under salt stress conditions. Its kinase activity is triggered by salt stress and is required for its function in salt stress response. Phosphorylates B'KAPPA, a B regulatory subunit of phosphatase 2A (PP2A). This is L-type lectin-domain containing receptor kinase SIT1 from Oryza sativa subsp. japonica (Rice).